A 77-amino-acid chain; its full sequence is Large ribosomal subunit protein uL24 (77 aa).

Belongs to the universal ribosomal protein uL24 family. In terms of assembly, part of the 50S ribosomal subunit.

In terms of biological role, one of two assembly initiator proteins, it binds directly to the 5'-end of the 23S rRNA, where it nucleates assembly of the 50S subunit. Functionally, one of the proteins that surrounds the polypeptide exit tunnel on the outside of the subunit. The polypeptide is Large ribosomal subunit protein uL24 (Sulfurovum sp. (strain NBC37-1)).